A 156-amino-acid polypeptide reads, in one-letter code: Small ribosomal subunit protein uS7 (156 aa).

The protein belongs to the universal ribosomal protein uS7 family. Part of the 30S ribosomal subunit. Contacts proteins S9 and S11.

Its function is as follows. One of the primary rRNA binding proteins, it binds directly to 16S rRNA where it nucleates assembly of the head domain of the 30S subunit. Is located at the subunit interface close to the decoding center, probably blocks exit of the E-site tRNA. The chain is Small ribosomal subunit protein uS7 from Mycolicibacterium smegmatis (strain ATCC 700084 / mc(2)155) (Mycobacterium smegmatis).